Consider the following 101-residue polypeptide: MAKTSAIERNLKRARLAKRYAAKREQLKAIARNQELPVEERFAAQLKLAELPRNSAVTRIRNRCEITGRPRAFYRKFRMSRIAMRDYASQGMIPGMVKSSW.

Belongs to the universal ribosomal protein uS14 family. In terms of assembly, part of the 30S ribosomal subunit. Contacts proteins S3 and S10.

Its function is as follows. Binds 16S rRNA, required for the assembly of 30S particles and may also be responsible for determining the conformation of the 16S rRNA at the A site. The protein is Small ribosomal subunit protein uS14 of Maricaulis maris (strain MCS10) (Caulobacter maris).